An 83-amino-acid chain; its full sequence is Small ribosomal subunit protein bS16 (83 aa).

Belongs to the bacterial ribosomal protein bS16 family.

This chain is Small ribosomal subunit protein bS16, found in Stutzerimonas stutzeri (strain A1501) (Pseudomonas stutzeri).